Reading from the N-terminus, the 564-residue chain is Esterase FE4 (564 aa).

The signal sequence occupies residues 1 to 23; the sequence is MKNTCGILLNLFLFIGCFLTCSA. A glycan (N-linked (GlcNAc...) asparagine) is linked at Asn-81. Residues Cys-89 and Cys-106 are joined by a disulfide bond. The active-site Acyl-ester intermediate is Ser-214. Cys-266 and Cys-277 form a disulfide bridge. Asn-269 is a glycosylation site (N-linked (GlcNAc...) asparagine). The active-site Charge relay system is Glu-339. N-linked (GlcNAc...) asparagine glycans are attached at residues Asn-371, Asn-404, and Asn-443. The active-site Charge relay system is the His-463.

The protein belongs to the type-B carboxylesterase/lipase family.

It carries out the reaction a carboxylic ester + H2O = an alcohol + a carboxylate + H(+). Functionally, overproduction of nonspecific esterases is a common mechanism of resistance to organophosphate insecticides. This chain is Esterase FE4, found in Myzus persicae (Green peach aphid).